The primary structure comprises 388 residues: Mitochondrial distribution and morphology protein 12 (388 aa).

In terms of domain architecture, SMP-LTD spans 1–388 (MSLDINWSLL…VFPNFHTVAL (388 aa)). 2 disordered regions span residues 75–101 (DDEG…RNEA) and 209–251 (PMSI…SSSS). Residues 83 to 101 (EEKQREKEREERDKLRNEA) show a composition bias toward basic and acidic residues. A compositionally biased stretch (pro residues) spans 234–243 (PSPPAHPAGL).

It belongs to the MDM12 family. As to quaternary structure, component of the ER-mitochondria encounter structure (ERMES) or MDM complex, composed of MMM1, MDM10, MDM12 and MDM34. An MMM1 homodimer associates with one molecule of MDM12 on each side in a pairwise head-to-tail manner, and the SMP-LTD domains of MMM1 and MDM12 generate a continuous hydrophobic tunnel for phospholipid trafficking.

The protein resides in the mitochondrion outer membrane. It localises to the endoplasmic reticulum membrane. Component of the ERMES/MDM complex, which serves as a molecular tether to connect the endoplasmic reticulum (ER) and mitochondria. Components of this complex are involved in the control of mitochondrial shape and protein biogenesis, and function in nonvesicular lipid trafficking between the ER and mitochondria. MDM12 is required for the interaction of the ER-resident membrane protein MMM1 and the outer mitochondrial membrane-resident beta-barrel protein MDM10. The MDM12-MMM1 subcomplex functions in the major beta-barrel assembly pathway that is responsible for biogenesis of all mitochondrial outer membrane beta-barrel proteins, and acts in a late step after the SAM complex. The MDM10-MDM12-MMM1 subcomplex further acts in the TOM40-specific pathway after the action of the MDM12-MMM1 complex. Essential for establishing and maintaining the structure of mitochondria and maintenance of mtDNA nucleoids. The protein is Mitochondrial distribution and morphology protein 12 of Cryptococcus neoformans var. neoformans serotype D (strain B-3501A) (Filobasidiella neoformans).